Consider the following 539-residue polypeptide: G protein-coupled receptor associated sorting protein 3 (539 aa).

Over residues 1 to 10 the composition is skewed to basic residues; sequence MTGSKNKARA. 2 disordered regions span residues 1 to 111 and 132 to 170; these read MTGS…DSWF and NSVAKCENKPSTSIQARVEEHTPRTSHKSRSGAEEEEEE. Basic and acidic residues-rich tracts occupy residues 66-80 and 88-106; these read VVAETKEGARPESKA and FNHKAENKYARSARKDKPS. Polar residues predominate over residues 132-146; the sequence is NSVAKCENKPSTSIQ.

The protein belongs to the GPRASP family. In terms of assembly, homodimer.

It is found in the cytoplasm. It localises to the nucleus. In terms of biological role, survival and differentiation promoting protein that plays a role in the regulation of neurosynaptogenesis. Induces phosphatase PP2A activity which results in APP dephosphorylation and inhibits BACE1-mediated processing of APP. The polypeptide is G protein-coupled receptor associated sorting protein 3 (Gprasp3) (Rattus norvegicus (Rat)).